The following is a 512-amino-acid chain: Glycerol kinase, glycosomal (512 aa).

Residue T11 participates in substrate binding. ATP is bound at residue R15. Substrate contacts are provided by R84, Y139, and D254. ATP-binding positions include T276, G321, and 422–426 (GLSKN). The Microbody targeting signal motif lies at 510 to 512 (AKL).

Belongs to the FGGY kinase family.

It localises to the glycosome. The catalysed reaction is glycerol + ATP = sn-glycerol 3-phosphate + ADP + H(+). It functions in the pathway polyol metabolism; glycerol degradation via glycerol kinase pathway; sn-glycerol 3-phosphate from glycerol: step 1/1. Catalyzes the phosphorylation of glycerol using ATP. Under anoxic conditions, when glycerol 3-phosphate accumulates in the glycosome, it catalyzes the reverse reaction, maintaining the ATP balance. Key enzyme for the survival of bloodstream forms under anoxic conditions. The polypeptide is Glycerol kinase, glycosomal (GK) (Trypanosoma brucei brucei).